The primary structure comprises 213 residues: V-type ATP synthase subunit D (213 aa).

Belongs to the V-ATPase D subunit family.

Functionally, produces ATP from ADP in the presence of a proton gradient across the membrane. The protein is V-type ATP synthase subunit D of Clostridium botulinum (strain Alaska E43 / Type E3).